The sequence spans 559 residues: Berberine bridge enzyme-like A (559 aa).

The first 21 residues, 1–21 (MFPLIILISFSLASLSETATG), serve as a signal peptide directing secretion. 2 N-linked (GlcNAc...) asparagine glycosylation sites follow: N25 and N37. Residues C29 and C86 are joined by a disulfide bond. An FAD-binding PCMH-type domain is found at 64–240 (FMPKPTFIIL…YAWKIRLLKV (177 aa)). Pros-8alpha-FAD histidine is present on H101. N-linked (GlcNAc...) asparagine glycosylation is found at N321, N355, and N494.

The protein belongs to the oxygen-dependent FAD-linked oxidoreductase family. FAD serves as cofactor. Mostly expressed in roots.

It localises to the vacuole. It functions in the pathway alkaloid biosynthesis; nicotine biosynthesis. In terms of biological role, involved in the biosynthesis of pyridine alkaloid natural products, leading mainly to the production of anabasine, anatabine, nicotine and nornicotine, effective deterrents against herbivores with antiparasitic and pesticide properties (neurotoxins); nornicotine serves as the precursor in the synthesis of the carcinogen compound N'-nitrosonornicotine (NNN). Catalyzes a late oxidation step subsequent to the pyridine ring condensation reaction in the biosynthesis of alkaloids. This is Berberine bridge enzyme-like A from Nicotiana tabacum (Common tobacco).